A 343-amino-acid polypeptide reads, in one-letter code: tRNA N6-adenosine threonylcarbamoyltransferase (343 aa).

Fe cation-binding residues include H115 and H119. Residues 137-141, D170, G183, D187, and N276 contribute to the substrate site; that span reads LVSGG. A Fe cation-binding site is contributed by D306.

This sequence belongs to the KAE1 / TsaD family. The cofactor is Fe(2+).

The protein localises to the cytoplasm. The catalysed reaction is L-threonylcarbamoyladenylate + adenosine(37) in tRNA = N(6)-L-threonylcarbamoyladenosine(37) in tRNA + AMP + H(+). Its function is as follows. Required for the formation of a threonylcarbamoyl group on adenosine at position 37 (t(6)A37) in tRNAs that read codons beginning with adenine. Is involved in the transfer of the threonylcarbamoyl moiety of threonylcarbamoyl-AMP (TC-AMP) to the N6 group of A37, together with TsaE and TsaB. TsaD likely plays a direct catalytic role in this reaction. The sequence is that of tRNA N6-adenosine threonylcarbamoyltransferase from Limosilactobacillus reuteri (strain DSM 20016) (Lactobacillus reuteri).